The chain runs to 129 residues: Large ribosomal subunit protein bL20 (129 aa).

This sequence belongs to the bacterial ribosomal protein bL20 family.

Binds directly to 23S ribosomal RNA and is necessary for the in vitro assembly process of the 50S ribosomal subunit. It is not involved in the protein synthesizing functions of that subunit. The chain is Large ribosomal subunit protein bL20 from Kineococcus radiotolerans (strain ATCC BAA-149 / DSM 14245 / SRS30216).